The primary structure comprises 591 residues: V-type ATP synthase alpha chain (591 aa).

An ATP-binding site is contributed by 233-240; that stretch reads GPFGAGKT.

The protein belongs to the ATPase alpha/beta chains family.

It carries out the reaction ATP + H2O + 4 H(+)(in) = ADP + phosphate + 5 H(+)(out). Produces ATP from ADP in the presence of a proton gradient across the membrane. The V-type alpha chain is a catalytic subunit. This chain is V-type ATP synthase alpha chain, found in Streptococcus pyogenes serotype M2 (strain MGAS10270).